Here is a 159-residue protein sequence, read N- to C-terminus: Small ribosomal subunit protein uS9 (159 aa).

This sequence belongs to the universal ribosomal protein uS9 family.

This Methylocella silvestris (strain DSM 15510 / CIP 108128 / LMG 27833 / NCIMB 13906 / BL2) protein is Small ribosomal subunit protein uS9.